The following is a 643-amino-acid chain: Alpha-dioxygenase PIOX (643 aa).

His168 (proton acceptor) is an active-site residue. A Ca(2+)-binding site is contributed by Asp169. Residue His173 coordinates heme b. Thr221, Trp223, Asp225, and Ser227 together coordinate Ca(2+). The heme b site is built by His393, Arg490, and Arg494.

Belongs to the peroxidase family. Heme b is required as a cofactor. Requires Ca(2+) as cofactor.

It catalyses the reaction hexadecanoate + O2 = (2R)-2-hydroperoxyhexadecanoate. The catalysed reaction is dodecanoate + O2 = (2R)-2-hydroperoxydodecanoate. Alpha-dioxygenase that catalyzes the primary oxygenation step of a variety of 14-20 carbon fatty acids, containing up to three unsaturated bonds, into their corresponding 2R-hydroperoxides. Involved in the production of oxylipins that function in cell signaling, wound healing, and protection from infection. The alpha-oxidation pathway of fatty acids may play a role during plant developmental processes. This chain is Alpha-dioxygenase PIOX, found in Pisum sativum (Garden pea).